A 510-amino-acid chain; its full sequence is NAD(P)H-quinone oxidoreductase subunit 2 B, chloroplastic (510 aa).

13 consecutive transmembrane segments (helical) span residues 24–44 (LLLF…GLIL), 57–77 (IPWL…ALLF), 99–119 (IFQF…VEYI), 124–144 (MAIT…MFLC), 149–169 (LITI…LSGY), 183–203 (YLLM…WLYG), 227–247 (PGIS…LSPA), 295–315 (WHLL…LIAI), 323–343 (MLAY…IVGD), 354–374 (YMLF…SFGL), 392–412 (AFLA…PPLA), 418–438 (LHLF…IGLL), and 482–502 (LSMI…NPII).

Belongs to the complex I subunit 2 family. In terms of assembly, NDH is composed of at least 16 different subunits, 5 of which are encoded in the nucleus.

It is found in the plastid. The protein resides in the chloroplast thylakoid membrane. The enzyme catalyses a plastoquinone + NADH + (n+1) H(+)(in) = a plastoquinol + NAD(+) + n H(+)(out). It carries out the reaction a plastoquinone + NADPH + (n+1) H(+)(in) = a plastoquinol + NADP(+) + n H(+)(out). NDH shuttles electrons from NAD(P)H:plastoquinone, via FMN and iron-sulfur (Fe-S) centers, to quinones in the photosynthetic chain and possibly in a chloroplast respiratory chain. The immediate electron acceptor for the enzyme in this species is believed to be plastoquinone. Couples the redox reaction to proton translocation, and thus conserves the redox energy in a proton gradient. This is NAD(P)H-quinone oxidoreductase subunit 2 B, chloroplastic from Morus indica (Mulberry).